Reading from the N-terminus, the 225-residue chain is Cold-regulated 413 inner membrane protein 1, chloroplastic (225 aa).

Residues 1–76 (MASLCLSSSR…RKRGSSVVCY (76 aa)) constitute a chloroplast transit peptide. Alanine 77 is a topological domain (stromal). A helical transmembrane segment spans residues 78-98 (APISANSLQWISTISCLALML). At 99-102 (ARGT) the chain is on the chloroplast intermembrane side. The chain crosses the membrane as a helical span at residues 103-123 (GIHKSVVVPLFALHAPSSIVA). Residues 124-128 (WIKGE) lie on the Stromal side of the membrane. A helical membrane pass occupies residues 129–149 (YGVWAAFLALIARLFFTFPGE). Topologically, residues 150–151 (LE) are chloroplast intermembrane. Residues 152–172 (LPFIALLLVIVAPYQVMNIRG) traverse the membrane as a helical segment. Residues 173 to 175 (KQE) are Stromal-facing. A helical transmembrane segment spans residues 176–196 (GAIIAIAISGFLAFQHFSRAG). The Chloroplast intermembrane segment spans residues 197–204 (SLEKAYEK). The chain crosses the membrane as a helical span at residues 205 to 225 (GSVLATVAIIGVTVVSLLLLL).

This sequence belongs to the Cold-regulated 413 protein family.

It is found in the plastid. It localises to the chloroplast inner membrane. The polypeptide is Cold-regulated 413 inner membrane protein 1, chloroplastic (COR413IM1) (Arabidopsis thaliana (Mouse-ear cress)).